We begin with the raw amino-acid sequence, 43 residues long: Alpha-conotoxin-like Leo-A1 (43 aa).

Positions 1–26 (LTLDRASDDTDVAAEIMSGLIALAID) are excised as a propeptide. 2 disulfides stabilise this stretch: C28-C34 and C29-C42. A lacks the Ser-Xaa-Pro motif that is crucial for potent interaction with nAChR region spans residues 30-32 (SDS).

The protein belongs to the conotoxin A superfamily. Expressed by the venom duct.

The protein localises to the secreted. Alpha-conotoxins act on postsynaptic membranes, they bind to the nicotinic acetylcholine receptors (nAChR) and thus inhibit them. Has possibly a distinct nAChR binding mode from other alpha-conotoxins, due to a different three residue motif (lacks the Ser-Xaa-Pro motif). This is Alpha-conotoxin-like Leo-A1 from Conus leopardus (Leopard cone).